The primary structure comprises 140 residues: Nucleoside diphosphate kinase (140 aa).

Lysine 11, phenylalanine 59, arginine 87, threonine 93, arginine 104, and asparagine 114 together coordinate ATP. Histidine 117 (pros-phosphohistidine intermediate) is an active-site residue.

This sequence belongs to the NDK family. Homotetramer. It depends on Mg(2+) as a cofactor.

It is found in the cytoplasm. It carries out the reaction a 2'-deoxyribonucleoside 5'-diphosphate + ATP = a 2'-deoxyribonucleoside 5'-triphosphate + ADP. It catalyses the reaction a ribonucleoside 5'-diphosphate + ATP = a ribonucleoside 5'-triphosphate + ADP. Its function is as follows. Major role in the synthesis of nucleoside triphosphates other than ATP. The ATP gamma phosphate is transferred to the NDP beta phosphate via a ping-pong mechanism, using a phosphorylated active-site intermediate. In Gluconacetobacter diazotrophicus (strain ATCC 49037 / DSM 5601 / CCUG 37298 / CIP 103539 / LMG 7603 / PAl5), this protein is Nucleoside diphosphate kinase.